Here is a 461-residue protein sequence, read N- to C-terminus: 26S proteasome regulatory subunit 8 (461 aa).

Gly-185–Thr-192 is a binding site for ATP.

This sequence belongs to the AAA ATPase family.

Its subcellular location is the cytoplasm. It is found in the nucleus. The 26S proteasome is involved in the ATP-dependent degradation of ubiquitinated proteins. The regulatory (or ATPase) complex confers ATP dependency and substrate specificity to the 26S complex. This Xenopus laevis (African clawed frog) protein is 26S proteasome regulatory subunit 8 (psmc5).